The chain runs to 289 residues: Protein FraH (289 aa).

The segment at 4-49 (CPNCNHPNPDGAVQCEACYTPLPATSNCPNCGATVQSDAAFCGQCG) adopts a DZANK-type zinc-finger fold. A zinc finger spans residues 18 to 48 (CEACYTPLPATSNCPNCGATVQSDAAFCGQC). Residues 204-260 (VHIGKPNDRIPPDVDVSGFANSEIVSRVHADIRLEGDAHYIEDVGSSNGTYINNLPL) form the FHA domain.

Putative heterocyst to vegetative cell connection. This chain is Protein FraH (fraH), found in Nostoc sp. (strain PCC 7120 / SAG 25.82 / UTEX 2576).